Here is an 85-residue protein sequence, read N- to C-terminus: MSKEDLIEMQGKVEEVLPDSRFRVTLDNGHQLIAYAGGKMRKHRIRVLAGDRVSLELSPYDLNKGRLTFRHIEGRGPRAPQRGAR.

The S1-like domain occupies 1–72 (MSKEDLIEMQ…NKGRLTFRHI (72 aa)).

Belongs to the IF-1 family. In terms of assembly, component of the 30S ribosomal translation pre-initiation complex which assembles on the 30S ribosome in the order IF-2 and IF-3, IF-1 and N-formylmethionyl-tRNA(fMet); mRNA recruitment can occur at any time during PIC assembly.

Its subcellular location is the cytoplasm. Its function is as follows. One of the essential components for the initiation of protein synthesis. Stabilizes the binding of IF-2 and IF-3 on the 30S subunit to which N-formylmethionyl-tRNA(fMet) subsequently binds. Helps modulate mRNA selection, yielding the 30S pre-initiation complex (PIC). Upon addition of the 50S ribosomal subunit IF-1, IF-2 and IF-3 are released leaving the mature 70S translation initiation complex. In Paracidovorax citrulli (strain AAC00-1) (Acidovorax citrulli), this protein is Translation initiation factor IF-1 1.